The following is a 424-amino-acid chain: Kynureninase (424 aa).

Residues Leu106, Thr107, 134–137, Asp219, His222, and Tyr244 contribute to the pyridoxal 5'-phosphate site; that span reads FPSD. Lys245 carries the N6-(pyridoxal phosphate)lysine modification. Pyridoxal 5'-phosphate-binding residues include Trp274 and Asn302.

It belongs to the kynureninase family. Homodimer. Requires pyridoxal 5'-phosphate as cofactor.

The enzyme catalyses L-kynurenine + H2O = anthranilate + L-alanine + H(+). The catalysed reaction is 3-hydroxy-L-kynurenine + H2O = 3-hydroxyanthranilate + L-alanine + H(+). Its pathway is amino-acid degradation; L-kynurenine degradation; L-alanine and anthranilate from L-kynurenine: step 1/1. It participates in cofactor biosynthesis; NAD(+) biosynthesis; quinolinate from L-kynurenine: step 2/3. Its function is as follows. Catalyzes the cleavage of L-kynurenine (L-Kyn) and L-3-hydroxykynurenine (L-3OHKyn) into anthranilic acid (AA) and 3-hydroxyanthranilic acid (3-OHAA), respectively. The sequence is that of Kynureninase from Xanthomonas campestris pv. campestris (strain 8004).